The following is a 425-amino-acid chain: 5'-deoxyadenosine deaminase (425 aa).

Zn(2+) is bound by residues H62 and H64. Substrate-binding residues include E91 and H183. H210 serves as a coordination point for Zn(2+). The substrate site is built by E213 and D298. D298 provides a ligand contact to Zn(2+).

Belongs to the metallo-dependent hydrolases superfamily. MTA/SAH deaminase family. In terms of assembly, homotetramer. Requires Zn(2+) as cofactor.

The enzyme catalyses 5'-deoxyadenosine + H2O + H(+) = 5'-deoxyinosine + NH4(+). It carries out the reaction S-adenosyl-L-homocysteine + H2O + H(+) = S-inosyl-L-homocysteine + NH4(+). It catalyses the reaction S-methyl-5'-thioadenosine + H2O + H(+) = S-methyl-5'-thioinosine + NH4(+). The catalysed reaction is adenosine + H2O + H(+) = inosine + NH4(+). It participates in amino-acid biosynthesis; S-adenosyl-L-methionine biosynthesis. Its function is as follows. Catalyzes the deamination of three SAM-derived enzymatic products, namely 5'-deoxyadenosine, S-adenosyl-L-homocysteine, and 5'-methylthioadenosine, to produce the inosine analogs. Can also deaminate adenosine. The preferred substrate for this enzyme is 5'-deoxyadenosine, but all these substrates are efficiently deaminated. Likely functions in a S-adenosyl-L-methionine (SAM) recycling pathway from S-adenosyl-L-homocysteine (SAH) produced from SAM-dependent methylation reactions. May also be involved in the recycling of 5'-deoxyadenosine, whereupon the 5'-deoxyribose moiety of 5'-deoxyinosine is further metabolized to deoxyhexoses used for the biosynthesis of aromatic amino acids in methanogens. In Methanosphaera stadtmanae (strain ATCC 43021 / DSM 3091 / JCM 11832 / MCB-3), this protein is 5'-deoxyadenosine deaminase.